An 872-amino-acid chain; its full sequence is Probable cation-transporting P-type ATPase (872 aa).

Residues 1–41 (MNKWTGLSAAAVLESRAQHGANLIPTKKLTPFWLLFLEQFK) lie on the Cytoplasmic side of the membrane. A helical membrane pass occupies residues 42–62 (SLVVILLLVATILSLVVAIIS). Residues 63 to 79 (GVNANWLFDHNLVIEWT) are Extracellular-facing. The helical transmembrane segment at 80-100 (QPFVILITVLANSLIGSIQEF) threads the bilayer. Residues 101–237 (KAQKSAHTLK…TKLSPLQQKL (137 aa)) are Cytoplasmic-facing. The chain crosses the membrane as a helical span at residues 238-257 (EKVGKWFSWFGLGLFVVVFL). Over 258-275 (VQLGLLGFHNFSANWSIA) the chain is Extracellular. Residues 276 to 293 (LIGAIALVVAIIPEGLVT) traverse the membrane as a helical segment. Residues 294-642 (FINVIFALSV…EQGRKTFLTC (349 aa)) lie on the Cytoplasmic side of the membrane. The active-site 4-aspartylphosphate intermediate is D331. Mg(2+) is bound by residues D587 and D591. Residues 643–662 (KRVLFNLFLTSIAGTIVVLL) traverse the membrane as a helical segment. Residues 663–685 (GLFVLGEVFREQLSKANHNFQVF) are Extracellular-facing. The helical transmembrane segment at 686-706 (TPTQLLIINLFVHGFPAVALA) threads the bilayer. The Cytoplasmic portion of the chain corresponds to 707 to 724 (IQPVQEKLMLKPFSTKNL). Residues 725–747 (FYNRGGFDLIWQSLLLSFLTLLF) form a helical membrane-spanning segment. The Extracellular portion of the chain corresponds to 748-768 (YSLGMVYAINDPELGKSGDLI). The chain crosses the membrane as a helical span at residues 769-788 (NRAGATCGFMVLGGSAALNS). The Cytoplasmic portion of the chain corresponds to 789–801 (LNLMVDRPLVATN). A helical membrane pass occupies residues 802–824 (PKHYGIVWLGALSSIFVFLLIIF). Residues 825 to 842 (INPLGLVFSTLKDLTAHP) lie on the Extracellular side of the membrane. A helical transmembrane segment spans residues 843 to 863 (VLIGYSFGGVLLYMTINEVVK). Residues 864–872 (LIRLSYGSV) lie on the Cytoplasmic side of the membrane.

It belongs to the cation transport ATPase (P-type) (TC 3.A.3) family. Type II subfamily.

It is found in the cell membrane. The enzyme catalyses ATP + H2O = ADP + phosphate + H(+). Could mediate calcium influx. This is Probable cation-transporting P-type ATPase (pacL) from Mycoplasma pneumoniae (strain ATCC 29342 / M129 / Subtype 1) (Mycoplasmoides pneumoniae).